We begin with the raw amino-acid sequence, 220 residues long: Gene 32 protein (220 aa).

The disordered stretch occupies residues 184 to 205; sequence NSAGGNGNAPGGGGAGAQVSAQ. Positions 187–199 are enriched in gly residues; it reads GGNGNAPGGGGAG.

This is Gene 32 protein (32) from Mycobacterium (Mycobacteriophage L5).